The chain runs to 1374 residues: DNA-directed RNA polymerase subunit beta (1374 aa).

It belongs to the RNA polymerase beta chain family. The RNAP catalytic core consists of 2 alpha, 1 beta, 1 beta' and 1 omega subunit. When a sigma factor is associated with the core the holoenzyme is formed, which can initiate transcription.

The enzyme catalyses RNA(n) + a ribonucleoside 5'-triphosphate = RNA(n+1) + diphosphate. Functionally, DNA-dependent RNA polymerase catalyzes the transcription of DNA into RNA using the four ribonucleoside triphosphates as substrates. The protein is DNA-directed RNA polymerase subunit beta of Rhodopseudomonas palustris (strain TIE-1).